Here is a 221-residue protein sequence, read N- to C-terminus: Nuclear phosphoprotein UL3 homolog (221 aa).

It belongs to the alphaherpesvirinae HHV-1 UL3 family. Phosphorylated.

The protein resides in the host nucleus. This Varicella-zoster virus (strain Oka vaccine) (HHV-3) protein is Nuclear phosphoprotein UL3 homolog.